A 329-amino-acid chain; its full sequence is Ribosomal protein L11 methyltransferase (329 aa).

S-adenosyl-L-methionine contacts are provided by Thr177, Gly198, Asp220, and Asn264.

Belongs to the methyltransferase superfamily. PrmA family.

It is found in the cytoplasm. The enzyme catalyses L-lysyl-[protein] + 3 S-adenosyl-L-methionine = N(6),N(6),N(6)-trimethyl-L-lysyl-[protein] + 3 S-adenosyl-L-homocysteine + 3 H(+). In terms of biological role, methylates ribosomal protein L11. In Helicobacter pylori (strain Shi470), this protein is Ribosomal protein L11 methyltransferase.